Consider the following 706-residue polypeptide: Catalase HPII (706 aa).

Residues histidine 77 and asparagine 151 contribute to the active site. Tyrosine 365 lines the heme pocket. The tract at residues 512–532 (EPPEEQVDESAPVSPALSQVT) is disordered.

Belongs to the catalase family. HPII subfamily. Heme serves as cofactor.

The protein resides in the cytoplasm. It catalyses the reaction 2 H2O2 = O2 + 2 H2O. In terms of biological role, decomposes hydrogen peroxide into water and oxygen; serves to protect cells from the toxic effects of hydrogen peroxide. The protein is Catalase HPII (katE) of Mycobacterium avium.